The following is a 276-amino-acid chain: Putative pyridoxine kinase (276 aa).

Asn-139 provides a ligand contact to ATP. Residue Glu-142 coordinates Mg(2+). Residues 176 to 180 (KGGKA), Asp-188, Gly-213, and Lys-238 each bind ATP.

Belongs to the ThiD family.

The catalysed reaction is pyridoxal + ATP = pyridoxal 5'-phosphate + ADP + H(+). Functionally, phosphorylates B6 vitamers; functions in a salvage pathway. Uses pyridoxal, pyridoxine, and pyridoxamine as substrates. The protein is Putative pyridoxine kinase (pdxK) of Staphylococcus epidermidis (strain ATCC 12228 / FDA PCI 1200).